A 157-amino-acid chain; its full sequence is Vitamin K-dependent protein C (157 aa).

The Peptidase S1 domain maps to 1–157; it reads ENGEVDLDIQ…GCGRLHNYGV (157 aa). Residue asparagine 17 is glycosylated (N-linked (GlcNAc...) asparagine). Aspartate 26 functions as the Charge relay system in the catalytic mechanism. The N-linked (GlcNAc...) asparagine glycan is linked to asparagine 78. Cystine bridges form between cysteine 96-cysteine 110 and cysteine 121-cysteine 149. Serine 125 acts as the Charge relay system in catalysis.

Belongs to the peptidase S1 family. In terms of tissue distribution, plasma; synthesized in the liver.

The protein localises to the secreted. Its subcellular location is the golgi apparatus. It localises to the endoplasmic reticulum. It catalyses the reaction Degradation of blood coagulation factors Va and VIIIa.. Protein C is a vitamin K-dependent serine protease that regulates blood coagulation by inactivating factors Va and VIIIa in the presence of calcium ions and phospholipids. Exerts a protective effect on the endothelial cell barrier function. In Equus caballus (Horse), this protein is Vitamin K-dependent protein C (PROC).